Here is a 301-residue protein sequence, read N- to C-terminus: Glycosyltransferase GlyG (301 aa).

Belongs to the glycosyltransferase 2 family.

Its pathway is protein modification; protein glycosylation. Functionally, involved in the polymorphic O-glycosylation of the serine-rich repeat protein PsrP. Catalyzes the third step in glycosylation PsrP in this bacteria. Transfers glucose from UDP-glucose to the terminal glucose moiety of already-glycosylated PsrP (using truncated substrates with PsrP SSR1-GlcNAc-Glc). Has a marked preference for PsrP substrate that has already been modified by GlcNAc and glucose. In vitro has hydrolytic activity against UDP-glucose and to a lesser extent against UDP-galactose. Also catalyzes the fourth step in glycosylation of the serine-rich repeat protein PsrP in this bacteria. Can transfer the sugar from UDP-glucose (and much less well from UDP-galactose) to the terminal sugar moiety of PsrP-GlcNAc-Glc-Gal or of PsrP-GlcNAc-Glc-Glc. In Streptococcus pneumoniae serotype 4 (strain ATCC BAA-334 / TIGR4), this protein is Glycosyltransferase GlyG.